The primary structure comprises 363 residues: Cyanuric acid amidohydrolase (363 aa).

Residues 1-104 (MYHIDVFRIP…TVFARRPAID (104 aa)) are RU A. Residues R52 and 83 to 84 (SG) contribute to the substrate site. Residues 112 to 249 (RLTLGIAFTR…NVVIAIGMSE (138 aa)) form an RU B region. K162 is a catalytic residue. Substrate is bound by residues R194 and 232 to 233 (SA). S232 (nucleophile) is an active-site residue. Residues 255 to 363 (LVIAHGVMSD…GGPFAVIARA (109 aa)) form an RU C region. A Mg(2+)-binding site is contributed by E297. Substrate-binding positions include R324 and 343-344 (SG). Mg(2+) contacts are provided by A346, Q349, G350, P351, and G354.

The protein belongs to the cyclic amide hydrolase (CyAH) family. As to quaternary structure, homotetramer.

The catalysed reaction is cyanurate + H2O = 1-carboxybiuret + H(+). Its pathway is xenobiotic degradation; atrazine degradation; biuret from cyanurate: step 1/1. Inhibited by barbituric acid. Its function is as follows. Responsible for the hydrolysis of cyanuric acid, an intermediate formed during catabolism of s-triazine based compounds in herbicides such as atrazine and polymers such as melamine. Catalyzes the hydrolytic opening of the s-triazine ring of cyanuric acid (2,4,6-trihydroxy-s-triazine) to yield carbon dioxide and carboxybiuret, which spontaneously decarboxylates to biuret. The chain is Cyanuric acid amidohydrolase (atzD) from Pseudomonas sp. (strain ADP).